The primary structure comprises 103 residues: Small ribosomal subunit protein uS14c (103 aa).

This sequence belongs to the universal ribosomal protein uS14 family. As to quaternary structure, part of the 30S ribosomal subunit.

It localises to the plastid. The protein localises to the chloroplast. In terms of biological role, binds 16S rRNA, required for the assembly of 30S particles. In Oryza nivara (Indian wild rice), this protein is Small ribosomal subunit protein uS14c.